The following is a 232-amino-acid chain: Large ribosomal subunit protein uL1 (232 aa).

The protein belongs to the universal ribosomal protein uL1 family. As to quaternary structure, part of the 50S ribosomal subunit.

In terms of biological role, binds directly to 23S rRNA. The L1 stalk is quite mobile in the ribosome, and is involved in E site tRNA release. Its function is as follows. Protein L1 is also a translational repressor protein, it controls the translation of the L11 operon by binding to its mRNA. This chain is Large ribosomal subunit protein uL1, found in Cutibacterium acnes (strain DSM 16379 / KPA171202) (Propionibacterium acnes).